The sequence spans 574 residues: Aspartate--tRNA ligase (574 aa).

Residue glutamate 169 coordinates L-aspartate. The interval 193 to 196 (QLFK) is aspartate. Arginine 215 lines the L-aspartate pocket. ATP-binding positions include 215–217 (RDE) and glutamine 224. Histidine 437 contacts L-aspartate. Glutamate 471 is a binding site for ATP. Residue arginine 478 coordinates L-aspartate. Residue 523-526 (GLDR) coordinates ATP.

The protein belongs to the class-II aminoacyl-tRNA synthetase family. Type 1 subfamily. In terms of assembly, homodimer.

Its subcellular location is the cytoplasm. The enzyme catalyses tRNA(Asp) + L-aspartate + ATP = L-aspartyl-tRNA(Asp) + AMP + diphosphate. Catalyzes the attachment of L-aspartate to tRNA(Asp) in a two-step reaction: L-aspartate is first activated by ATP to form Asp-AMP and then transferred to the acceptor end of tRNA(Asp). The polypeptide is Aspartate--tRNA ligase (Mycoplasma mycoides subsp. mycoides SC (strain CCUG 32753 / NCTC 10114 / PG1)).